Here is a 183-residue protein sequence, read N- to C-terminus: MFLVVGQGNPGERYARTRHNLGFMVLDRLGLSFRPRGEALVAEAEGGLFLKPLTYYNLTGRAVAPLARFYKIPPERILVVHDEMDLPLGRIRFKAGGSAAGNRGVLSIEEALGTRAFHRLRLGIGKPPDPSRGAEYVLSPFREEELPVVERVLEAAKEAVWCWVREGLPPCAGRFNGLDLSLG.

Tyr-14 contributes to the tRNA binding site. His-19 (proton acceptor) is an active-site residue. Positions 55 and 57 each coordinate tRNA.

The protein belongs to the PTH family. In terms of assembly, monomer.

The protein localises to the cytoplasm. The catalysed reaction is an N-acyl-L-alpha-aminoacyl-tRNA + H2O = an N-acyl-L-amino acid + a tRNA + H(+). Functionally, hydrolyzes ribosome-free peptidyl-tRNAs (with 1 or more amino acids incorporated), which drop off the ribosome during protein synthesis, or as a result of ribosome stalling. In terms of biological role, catalyzes the release of premature peptidyl moieties from peptidyl-tRNA molecules trapped in stalled 50S ribosomal subunits, and thus maintains levels of free tRNAs and 50S ribosomes. The polypeptide is Peptidyl-tRNA hydrolase (Thermus thermophilus (strain ATCC BAA-163 / DSM 7039 / HB27)).